A 1135-amino-acid chain; its full sequence is Retinoblastoma-like protein 2 (1135 aa).

The segment at 1–43 (MASGGNQSPPPPPAAAASSEEEEEDGDAADRAQPAGSPSHQIQ) is disordered. Residue Ser-410 is modified to Phosphoserine. Residue Thr-414 is modified to Phosphothreonine. The tract at residues 414–613 (TPVSTAAHSL…DRIRDNENRV (200 aa)) is domain A. Residues 414–1021 (TPVSTAAHSL…QAFAMKYSQA (608 aa)) are pocket; binds E1A. A glycan (O-linked (GlcNAc) serine) is linked at Ser-417. The tract at residues 614–824 (PTCEEVMPPQ…PGQPLTSSSI (211 aa)) is spacer. Ser-636 is subject to Phosphoserine. Thr-639 carries the phosphothreonine modification. A phosphoserine mark is found at Ser-659, Ser-669, Ser-684, Ser-942, Ser-946, Ser-960, Ser-965, and Ser-967. 4 stretches are compositionally biased toward polar residues: residues 661–674 (TTLY…TVST), 683–692 (DSPSEGSTSG), 935–950 (SGSS…PTEL), and 958–969 (DSSPVMRSNSTL). Disordered regions lie at residues 661-698 (TTLY…PPQP) and 930-994 (GKRR…VEEE). Residues 825–1021 (RPRKTSSLAL…QAFAMKYSQA (197 aa)) form a domain B region. The residue at position 968 (Thr-968) is a Phosphothreonine. Over residues 971–981 (VPQPSSAPPTP) the composition is skewed to pro residues. A phosphoserine mark is found at Ser-975 and Ser-976. Thr-980 carries the phosphothreonine modification. Ser-1031, Ser-1064, Ser-1076, and Ser-1108 each carry phosphoserine.

It belongs to the retinoblastoma protein (RB) family. Interacts with AATF and RINT1. Component of the DREAM complex (also named LINC complex) at least composed of E2F4, E2F5, LIN9, LIN37, LIN52, LIN54, MYBL1, MYBL2, RBL1, RBL2, RBBP4, TFDP1 and TFDP2. The complex exists in quiescent cells where it represses cell cycle-dependent genes. It dissociates in S phase when LIN9, LIN37, LIN52 and LIN54 form a subcomplex that binds to MYBL2. Interacts with USP4. Interacts with KMT5B, KMT5C and USP4. Interacts with PML. Interacts with RBBP9. Interacts with CD53. Post-translationally, during G0 and early G1 phase of the cell cycle, phosphorylated on Ser-636 and on 5 sites within the domain B. Phosphorylation on Ser-669 in G1 leads to its ubiquitin-dependent proteolysis.

The protein resides in the nucleus. Functionally, key regulator of entry into cell division. Directly involved in heterochromatin formation by maintaining overall chromatin structure and, in particular, that of constitutive heterochromatin by stabilizing histone methylation. Recruits and targets histone methyltransferases KMT5B and KMT5C, leading to epigenetic transcriptional repression. Controls histone H4 'Lys-20' trimethylation. Probably acts as a transcription repressor by recruiting chromatin-modifying enzymes to promoters. Potent inhibitor of E2F-mediated trans-activation, associates preferentially with E2F5. Binds to cyclins A and E. Binds to and may be involved in the transforming capacity of the adenovirus E1A protein. May act as a tumor suppressor. The sequence is that of Retinoblastoma-like protein 2 (Rbl2) from Mus musculus (Mouse).